We begin with the raw amino-acid sequence, 130 residues long: Mating-type-like protein A1 (130 aa).

Residues 68 to 127 (TYTTRKPLPAKAKLQLVETFSKKRYLTRCEKHQLAVQCGITTNQVQIWFANRRKRSKDLN) constitute a DNA-binding region (homeobox).

It belongs to the MATA1 family.

The protein localises to the nucleus. Functionally, mating type proteins are sequence specific DNA-binding proteins that act as master switches in yeast differentiation by controlling gene expression in a cell type-specific fashion. In Candida glabrata (strain ATCC 2001 / BCRC 20586 / JCM 3761 / NBRC 0622 / NRRL Y-65 / CBS 138) (Yeast), this protein is Mating-type-like protein A1 (MTL1A1).